A 165-amino-acid chain; its full sequence is Thiol peroxidase (165 aa).

The Thioredoxin domain maps to 18–165; the sequence is PAVGSPAPAF…YEAALAALGA (148 aa). The Cysteine sulfenic acid (-SOH) intermediate role is filled by C60. Cysteines 60 and 93 form a disulfide.

This sequence belongs to the peroxiredoxin family. Tpx subfamily. Homodimer.

It carries out the reaction a hydroperoxide + [thioredoxin]-dithiol = an alcohol + [thioredoxin]-disulfide + H2O. Its function is as follows. Thiol-specific peroxidase that catalyzes the reduction of hydrogen peroxide and organic hydroperoxides to water and alcohols, respectively. Plays a role in cell protection against oxidative stress by detoxifying peroxides. This is Thiol peroxidase from Mycobacterium bovis (strain ATCC BAA-935 / AF2122/97).